The sequence spans 273 residues: 2-dehydro-3-deoxyphosphooctonate aldolase (273 aa).

This sequence belongs to the KdsA family.

The protein localises to the cytoplasm. The enzyme catalyses D-arabinose 5-phosphate + phosphoenolpyruvate + H2O = 3-deoxy-alpha-D-manno-2-octulosonate-8-phosphate + phosphate. The protein operates within carbohydrate biosynthesis; 3-deoxy-D-manno-octulosonate biosynthesis; 3-deoxy-D-manno-octulosonate from D-ribulose 5-phosphate: step 2/3. Its pathway is bacterial outer membrane biogenesis; lipopolysaccharide biosynthesis. This is 2-dehydro-3-deoxyphosphooctonate aldolase from Citrifermentans bemidjiense (strain ATCC BAA-1014 / DSM 16622 / JCM 12645 / Bem) (Geobacter bemidjiensis).